Consider the following 247-residue polypeptide: Sugar fermentation stimulation protein homolog (247 aa).

This sequence belongs to the SfsA family.

The protein is Sugar fermentation stimulation protein homolog of Aeromonas hydrophila subsp. hydrophila (strain ATCC 7966 / DSM 30187 / BCRC 13018 / CCUG 14551 / JCM 1027 / KCTC 2358 / NCIMB 9240 / NCTC 8049).